The primary structure comprises 287 residues: Pyridoxal kinase PdxY (287 aa).

Substrate contacts are provided by residues Ser-10 and 45–46; that span reads TQ. ATP contacts are provided by residues Asp-112, Ala-144, Glu-149, Lys-182, and 209–212; that span reads RPLV. Asp-224 serves as a coordination point for substrate.

It belongs to the pyridoxine kinase family. PdxY subfamily. In terms of assembly, homodimer. Mg(2+) is required as a cofactor.

The enzyme catalyses pyridoxal + ATP = pyridoxal 5'-phosphate + ADP + H(+). Its pathway is cofactor metabolism; pyridoxal 5'-phosphate salvage; pyridoxal 5'-phosphate from pyridoxal: step 1/1. In terms of biological role, pyridoxal kinase involved in the salvage pathway of pyridoxal 5'-phosphate (PLP). Catalyzes the phosphorylation of pyridoxal to PLP. The sequence is that of Pyridoxal kinase PdxY from Shigella boydii serotype 4 (strain Sb227).